The following is a 215-amino-acid chain: Octanoyltransferase (215 aa).

The BPL/LPL catalytic domain occupies 31–206; it reads TDAPDEVWLV…QLVKHLDYAE (176 aa). Residues 70–77, 137–139, and 150–152 contribute to the substrate site; these read RGGQVTYH, SLG, and GLA. Residue Cys168 is the Acyl-thioester intermediate of the active site.

It belongs to the LipB family.

It localises to the cytoplasm. It carries out the reaction octanoyl-[ACP] + L-lysyl-[protein] = N(6)-octanoyl-L-lysyl-[protein] + holo-[ACP] + H(+). The protein operates within protein modification; protein lipoylation via endogenous pathway; protein N(6)-(lipoyl)lysine from octanoyl-[acyl-carrier-protein]: step 1/2. In terms of biological role, catalyzes the transfer of endogenously produced octanoic acid from octanoyl-acyl-carrier-protein onto the lipoyl domains of lipoate-dependent enzymes. Lipoyl-ACP can also act as a substrate although octanoyl-ACP is likely to be the physiological substrate. This chain is Octanoyltransferase, found in Pseudomonas fluorescens (strain ATCC BAA-477 / NRRL B-23932 / Pf-5).